We begin with the raw amino-acid sequence, 291 residues long: Pyridoxal 5'-phosphate synthase subunit PdxS (291 aa).

Asp23 is a D-ribose 5-phosphate binding site. Catalysis depends on Lys80, which acts as the Schiff-base intermediate with D-ribose 5-phosphate. Position 152 (Gly152) interacts with D-ribose 5-phosphate. Residue Arg164 participates in D-glyceraldehyde 3-phosphate binding. D-ribose 5-phosphate is bound by residues Gly213 and 234–235 (GS).

It belongs to the PdxS/SNZ family. In the presence of PdxT, forms a dodecamer of heterodimers.

The catalysed reaction is aldehydo-D-ribose 5-phosphate + D-glyceraldehyde 3-phosphate + L-glutamine = pyridoxal 5'-phosphate + L-glutamate + phosphate + 3 H2O + H(+). Its pathway is cofactor biosynthesis; pyridoxal 5'-phosphate biosynthesis. In terms of biological role, catalyzes the formation of pyridoxal 5'-phosphate from ribose 5-phosphate (RBP), glyceraldehyde 3-phosphate (G3P) and ammonia. The ammonia is provided by the PdxT subunit. Can also use ribulose 5-phosphate and dihydroxyacetone phosphate as substrates, resulting from enzyme-catalyzed isomerization of RBP and G3P, respectively. The protein is Pyridoxal 5'-phosphate synthase subunit PdxS of Streptococcus pneumoniae (strain P1031).